We begin with the raw amino-acid sequence, 383 residues long: tRNA-specific 2-thiouridylase MnmA (383 aa).

Residues 29–36 and methionine 55 each bind ATP; that span reads GMSGGVDS. The interval 115–117 is interaction with target base in tRNA; it reads NPD. The active-site Nucleophile is the cysteine 120. Cysteine 120 and cysteine 217 are oxidised to a cystine. An ATP-binding site is contributed by glycine 145. The interval 167-169 is interaction with tRNA; sequence KDQ. The active-site Cysteine persulfide intermediate is cysteine 217. The interaction with tRNA stretch occupies residues 329–330; that stretch reads RY.

Belongs to the MnmA/TRMU family.

The protein localises to the cytoplasm. The enzyme catalyses S-sulfanyl-L-cysteinyl-[protein] + uridine(34) in tRNA + AH2 + ATP = 2-thiouridine(34) in tRNA + L-cysteinyl-[protein] + A + AMP + diphosphate + H(+). Its function is as follows. Catalyzes the 2-thiolation of uridine at the wobble position (U34) of tRNA, leading to the formation of s(2)U34. The polypeptide is tRNA-specific 2-thiouridylase MnmA (Histophilus somni (strain 129Pt) (Haemophilus somnus)).